The chain runs to 122 residues: Large ribosomal subunit protein uL22 (122 aa).

Positions 102 to 122 are disordered; the sequence is VAEGKEMKSSKSHKKNQAEGK.

Belongs to the universal ribosomal protein uL22 family. Part of the 50S ribosomal subunit.

In terms of biological role, this protein binds specifically to 23S rRNA; its binding is stimulated by other ribosomal proteins, e.g. L4, L17, and L20. It is important during the early stages of 50S assembly. It makes multiple contacts with different domains of the 23S rRNA in the assembled 50S subunit and ribosome. The globular domain of the protein is located near the polypeptide exit tunnel on the outside of the subunit, while an extended beta-hairpin is found that lines the wall of the exit tunnel in the center of the 70S ribosome. This Helicobacter pylori (strain G27) protein is Large ribosomal subunit protein uL22.